A 320-amino-acid chain; its full sequence is Aspartate carbamoyltransferase catalytic subunit (320 aa).

Carbamoyl phosphate is bound by residues R53 and T54. Residue K82 participates in L-aspartate binding. Positions 103, 131, and 134 each coordinate carbamoyl phosphate. 2 residues coordinate L-aspartate: R164 and R227. Carbamoyl phosphate-binding residues include L266 and P267.

The protein belongs to the aspartate/ornithine carbamoyltransferase superfamily. ATCase family. In terms of assembly, heterododecamer (2C3:3R2) of six catalytic PyrB chains organized as two trimers (C3), and six regulatory PyrI chains organized as three dimers (R2).

The catalysed reaction is carbamoyl phosphate + L-aspartate = N-carbamoyl-L-aspartate + phosphate + H(+). Its pathway is pyrimidine metabolism; UMP biosynthesis via de novo pathway; (S)-dihydroorotate from bicarbonate: step 2/3. In terms of biological role, catalyzes the condensation of carbamoyl phosphate and aspartate to form carbamoyl aspartate and inorganic phosphate, the committed step in the de novo pyrimidine nucleotide biosynthesis pathway. This Bifidobacterium adolescentis (strain ATCC 15703 / DSM 20083 / NCTC 11814 / E194a) protein is Aspartate carbamoyltransferase catalytic subunit.